Here is a 651-residue protein sequence, read N- to C-terminus: Acetyl-coenzyme A synthetase (651 aa).

CoA is bound by residues 189-192 (RGGK), Thr311, and Asn335. Residues 387 to 389 (GEP), 411 to 416 (DTWWQT), Asp500, and Arg515 each bind ATP. Ser523 serves as a coordination point for CoA. Arg526 is an ATP binding site. Mg(2+) is bound by residues Val537, His539, and Val542. Arg586 provides a ligand contact to CoA. Lys611 carries the post-translational modification N6-acetyllysine.

Belongs to the ATP-dependent AMP-binding enzyme family. The cofactor is Mg(2+). Acetylated. Deacetylation by the SIR2-homolog deacetylase activates the enzyme.

The catalysed reaction is acetate + ATP + CoA = acetyl-CoA + AMP + diphosphate. Catalyzes the conversion of acetate into acetyl-CoA (AcCoA), an essential intermediate at the junction of anabolic and catabolic pathways. AcsA undergoes a two-step reaction. In the first half reaction, AcsA combines acetate with ATP to form acetyl-adenylate (AcAMP) intermediate. In the second half reaction, it can then transfer the acetyl group from AcAMP to the sulfhydryl group of CoA, forming the product AcCoA. This chain is Acetyl-coenzyme A synthetase, found in Brucella suis (strain ATCC 23445 / NCTC 10510).